The sequence spans 386 residues: Cytoplasmic 60S subunit biogenesis factor ZNF622 (386 aa).

Residue Ala2 is modified to N-acetylalanine. U1-type zinc fingers lie at residues 4–28 and 67–91; these read YTCITCRVAFRDAEMQRAHYKTDWH and TYCTVCSKKFATFNAYENHLKSRRH. Residues 135–237 form a disordered region; sequence AIKAQPSTSP…AEDAEAEESP (103 aa). The segment covering 165-176 has biased composition (basic and acidic residues); sequence GTPERDPTEKPP. The span at 194-235 shows a compositional bias: acidic residues; the sequence is EESEEEGEEDDEDWEDIDSDDGLECENPGVEEEDAEDAEAEE. Phosphoserine is present on Ser269.

It belongs to the REI1 family. Homo- and heterodimer. Associates with pre-60S ribosomal particles. Interacts with MELK and MYBL2. Interacts with DNAJC21. In terms of processing, phosphorylated by MELK. The phosphorylation may redirect the protein to the nucleus. Post-translationally, ubiquitinated by HECTD1, leading to its degradation.

It localises to the cytoplasm. Its subcellular location is the nucleus. Pre-60S-associated cytoplasmic factor involved in the cytoplasmic maturation of the 60S subunit. The chain is Cytoplasmic 60S subunit biogenesis factor ZNF622 (Znf622) from Rattus norvegicus (Rat).